Reading from the N-terminus, the 271-residue chain is Acetyl-coenzyme A carboxylase carboxyl transferase subunit beta (271 aa).

One can recognise a CoA carboxyltransferase N-terminal domain in the interval 21–271 (LWIQCPYCKQ…LGDLLALHTA (251 aa)). The Zn(2+) site is built by Cys-25, Cys-28, Cys-43, and Cys-46. The segment at 25 to 46 (CPYCKQGSYRESLGNAQVCPHC) adopts a C4-type zinc-finger fold.

This sequence belongs to the AccD/PCCB family. As to quaternary structure, acetyl-CoA carboxylase is a heterohexamer composed of biotin carboxyl carrier protein (AccB), biotin carboxylase (AccC) and two subunits each of ACCase subunit alpha (AccA) and ACCase subunit beta (AccD). Zn(2+) is required as a cofactor.

It localises to the cytoplasm. The catalysed reaction is N(6)-carboxybiotinyl-L-lysyl-[protein] + acetyl-CoA = N(6)-biotinyl-L-lysyl-[protein] + malonyl-CoA. Its pathway is lipid metabolism; malonyl-CoA biosynthesis; malonyl-CoA from acetyl-CoA: step 1/1. Functionally, component of the acetyl coenzyme A carboxylase (ACC) complex. Biotin carboxylase (BC) catalyzes the carboxylation of biotin on its carrier protein (BCCP) and then the CO(2) group is transferred by the transcarboxylase to acetyl-CoA to form malonyl-CoA. In Lacticaseibacillus casei (strain BL23) (Lactobacillus casei), this protein is Acetyl-coenzyme A carboxylase carboxyl transferase subunit beta.